The sequence spans 313 residues: Ester hydrolase C11orf54 homolog (313 aa).

3 residues coordinate Zn(2+): His-264, His-266, and His-276.

Monomer. Zn(2+) serves as cofactor.

It localises to the nucleus. Its subcellular location is the cytoplasm. Functionally, exhibits ester hydrolase activity on the substrate p-nitrophenyl acetate, in vitro. May regulate DNA damage and repair by regulating HIF1A degradation via chaperone-mediated autophagy (CMA). The protein is Ester hydrolase C11orf54 homolog of Xenopus tropicalis (Western clawed frog).